A 179-amino-acid polypeptide reads, in one-letter code: Trypsin inhibitor (179 aa).

Pyrrolidone carboxylic acid is present on glutamine 1. Disulfide bonds link cysteine 40-cysteine 85 and cysteine 132-cysteine 143.

The protein belongs to the protease inhibitor I3 (leguminous Kunitz-type inhibitor) family. Heterodimer of an alpha and a beta chain linked by a disulfide bond. Abundant in dry seeds.

It localises to the secreted. Its function is as follows. Inhibits trypsin, plasmin, human plasma kallikrein, chymotrypsin and factor XIIa activity. This is Trypsin inhibitor from Leucaena leucocephala (White popinac).